We begin with the raw amino-acid sequence, 86 residues long: Cell division topological specificity factor (86 aa).

This sequence belongs to the MinE family.

Functionally, prevents the cell division inhibition by proteins MinC and MinD at internal division sites while permitting inhibition at polar sites. This ensures cell division at the proper site by restricting the formation of a division septum at the midpoint of the long axis of the cell. This is Cell division topological specificity factor from Rhizobium etli (strain ATCC 51251 / DSM 11541 / JCM 21823 / NBRC 15573 / CFN 42).